A 279-amino-acid chain; its full sequence is Peptide deformylase 1B, chloroplastic (279 aa).

Fe cation contacts are provided by cysteine 177 and histidine 219. Residue glutamate 220 is part of the active site. Histidine 223 contributes to the Fe cation binding site.

Belongs to the polypeptide deformylase family. It depends on Fe(2+) as a cofactor.

It localises to the plastid. Its subcellular location is the chloroplast. It catalyses the reaction N-terminal N-formyl-L-methionyl-[peptide] + H2O = N-terminal L-methionyl-[peptide] + formate. Removes the formyl group from the N-terminal Met of newly synthesized proteins. In Solanum lycopersicum (Tomato), this protein is Peptide deformylase 1B, chloroplastic (PDF1B).